Consider the following 430-residue polypeptide: Spermatogenic leucine zipper protein 1 (430 aa).

The disordered stretch occupies residues 1–25 (MASSAKSAEMPTISKTVNPTPDPHQ). Residues 62–102 (EQQTAQKFNNLLKEIKDILKNMAGFEEKITEAKELFEETNI) are a coiled coil. At Ser-107 the chain carries Phosphoserine. Residues 166–177 (KINEMLSTNLPV) form a helix-loop-helix motif region. Residues 178–244 (SLAPEKEDNE…NVQEETMKIR (67 aa)) form a basic motif region. Coiled coils occupy residues 214–269 (LEEK…KLIK) and 316–351 (SLQL…TLQE). Residue Ser-258 is modified to Phosphoserine. The segment at 303-324 (LEEQVKKLSHDTYSLQLMAALL) is leucine-zipper.

In terms of assembly, interacts with PPP1CC isoform gamma-2. Post-translationally, phosphorylated by MAPK1/ERK2 and MAPK3/ERK1. In terms of tissue distribution, specifically and strongly expressed in the testis. Expressed in several tumor cell lines.

It localises to the cytoplasm. The protein localises to the nucleus. In terms of biological role, transcription factor that binds to the DNA sequence 5'-CANNTG-3'(E box) and the G-box motif. May play an important role in the regulation of cell proliferation and differentiation during spermatogenesis. The chain is Spermatogenic leucine zipper protein 1 (SPZ1) from Homo sapiens (Human).